Reading from the N-terminus, the 192-residue chain is Pyridoxal 5'-phosphate synthase subunit PdxT (192 aa).

L-glutamine is bound at residue 46 to 48 (GES). Residue cysteine 75 is the Nucleophile of the active site. L-glutamine is bound by residues arginine 101 and 129 to 130 (IR). Active-site charge relay system residues include histidine 166 and glutamate 168.

The protein belongs to the glutaminase PdxT/SNO family. As to quaternary structure, in the presence of PdxS, forms a dodecamer of heterodimers. Only shows activity in the heterodimer.

It catalyses the reaction aldehydo-D-ribose 5-phosphate + D-glyceraldehyde 3-phosphate + L-glutamine = pyridoxal 5'-phosphate + L-glutamate + phosphate + 3 H2O + H(+). The enzyme catalyses L-glutamine + H2O = L-glutamate + NH4(+). Its pathway is cofactor biosynthesis; pyridoxal 5'-phosphate biosynthesis. In terms of biological role, catalyzes the hydrolysis of glutamine to glutamate and ammonia as part of the biosynthesis of pyridoxal 5'-phosphate. The resulting ammonia molecule is channeled to the active site of PdxS. The sequence is that of Pyridoxal 5'-phosphate synthase subunit PdxT from Staphylococcus carnosus (strain TM300).